Here is a 285-residue protein sequence, read N- to C-terminus: Nucleotide-binding protein Avin_12760 (285 aa).

An ATP-binding site is contributed by 8-15; the sequence is GRSGSGKS. 60-63 is a binding site for GTP; it reads DARN.

Belongs to the RapZ-like family.

Functionally, displays ATPase and GTPase activities. The polypeptide is Nucleotide-binding protein Avin_12760 (Azotobacter vinelandii (strain DJ / ATCC BAA-1303)).